Reading from the N-terminus, the 469-residue chain is Neuraminidase (469 aa).

Residues 1 to 6 (MNTNQR) are Intravirion-facing. Residues 7-27 (IITIGTICLIVGIISLLLQIG) traverse the membrane as a helical segment. The segment at 11–33 (GTICLIVGIISLLLQIGNIISLW) is involved in apical transport and lipid raft association. Residues 28 to 469 (NIISLWISHS…GADLPFTIDK (442 aa)) are Virion surface-facing. A hypervariable stalk region region spans residues 36–90 (HSIQTREKNHPEVCNQSVITYENNTWVNQTYVNISNANIVAGQGVTSIILAGNSP). 4 N-linked (GlcNAc...) asparagine; by host glycosylation sites follow: N50, N58, N63, and N68. Residues 91–469 (LCPISGWAIY…GADLPFTIDK (379 aa)) form a head of neuraminidase region. 8 cysteine pairs are disulfide-bonded: C92–C417, C124–C129, C184–C231, C233–C238, C279–C292, C281–C290, C318–C335, and C421–C446. R118 lines the substrate pocket. N146 carries N-linked (GlcNAc...) asparagine; by host glycosylation. D151 acts as the Proton donor/acceptor in catalysis. R152 contacts substrate. Residue N235 is glycosylated (N-linked (GlcNAc...) asparagine; by host). 277-278 (EE) is a binding site for substrate. R293 serves as a coordination point for substrate. Residues D294, D324, and N344 each contribute to the Ca(2+) site. Residue R368 coordinates substrate. Y402 (nucleophile) is an active-site residue. N454 carries an N-linked (GlcNAc...) asparagine; by host glycan.

Belongs to the glycosyl hydrolase 34 family. Homotetramer. Ca(2+) serves as cofactor. N-glycosylated.

The protein resides in the virion membrane. Its subcellular location is the host apical cell membrane. The enzyme catalyses Hydrolysis of alpha-(2-&gt;3)-, alpha-(2-&gt;6)-, alpha-(2-&gt;8)- glycosidic linkages of terminal sialic acid residues in oligosaccharides, glycoproteins, glycolipids, colominic acid and synthetic substrates.. Its activity is regulated as follows. Inhibited by the neuraminidase inhibitors zanamivir (Relenza) and oseltamivir (Tamiflu). These drugs interfere with the release of progeny virus from infected cells and are effective against all influenza strains. Resistance to neuraminidase inhibitors is quite rare. In terms of biological role, catalyzes the removal of terminal sialic acid residues from viral and cellular glycoconjugates. Cleaves off the terminal sialic acids on the glycosylated HA during virus budding to facilitate virus release. Additionally helps virus spread through the circulation by further removing sialic acids from the cell surface. These cleavages prevent self-aggregation and ensure the efficient spread of the progeny virus from cell to cell. Otherwise, infection would be limited to one round of replication. Described as a receptor-destroying enzyme because it cleaves a terminal sialic acid from the cellular receptors. May facilitate viral invasion of the upper airways by cleaving the sialic acid moieties on the mucin of the airway epithelial cells. Likely to plays a role in the budding process through its association with lipid rafts during intracellular transport. May additionally display a raft-association independent effect on budding. Plays a role in the determination of host range restriction on replication and virulence. Sialidase activity in late endosome/lysosome traffic seems to enhance virus replication. This chain is Neuraminidase, found in Influenza A virus (strain A/Swine/Wisconsin/1/1967 H1N1).